A 312-amino-acid chain; its full sequence is Bifunctional pinoresinol-lariciresinol reductase (312 aa).

Residues 11–17, Arg36, and Lys45 contribute to the NADP(+) site; that span reads GGTGYIG. Lys138 (proton acceptor) is an active-site residue. Position 142 (Arg142) interacts with NADP(+). Substrate is bound at residue His270.

The protein belongs to the NmrA-type oxidoreductase family. Isoflavone reductase subfamily. Dimer.

The enzyme catalyses (+)-lariciresinol + NADP(+) = (+)-pinoresinol + NADPH + H(+). It catalyses the reaction (-)-secoisolariciresinol + NADP(+) = (+)-lariciresinol + NADPH + H(+). Its function is as follows. Reductase involved in lignan biosynthesis. Catalyzes the enantioselective sequential conversion of (+)-pinoresinol into (+)-lariciresinol and of (+)-lariciresinol into (-)-secoisolariciresinol. Abstracts the 4R-hydride from the NADPH cofactor during catalysis. The polypeptide is Bifunctional pinoresinol-lariciresinol reductase (Thuja plicata (Western red-cedar)).